The chain runs to 154 residues: PTTG1IP family member 2 (154 aa).

The first 26 residues, 1–26 (MCWLRAWGQILLPVFLSLFLIQLLIS), serve as a signal peptide directing secretion. At 27 to 97 (FSENGFIHSP…SIYWLNCKVD (71 aa)) the chain is on the extracellular side. The helical transmembrane segment at 98 to 118 (MFGIMMLLLIAVLITGFVWYC) threads the bilayer. The Cytoplasmic segment spans residues 119–154 (CAYHFYLQDLNRNRVYFYGRRETVPIHDRSATVYDE).

The protein resides in the membrane. The chain is PTTG1IP family member 2 from Homo sapiens (Human).